The chain runs to 50 residues: Ampulexin 1 (50 aa).

Residues 1–26 form the signal peptide; that stretch reads MKAIMVLFYVMMLTIIASVSMVNGSP.

As to quaternary structure, monomer. In terms of tissue distribution, expressed in venom sac and, to a lesser extent, in venom gland. Not expressed in brain.

Its subcellular location is the secreted. Its function is as follows. Amphipathic peptide which probably adopts an alpha-helical structure. When injected in subesophageal ganglia of cockroach P.americana, a natural host for larvae of A.compressa, dampens the escape response for about 1 hour which may contribute to early stages of hypokinesia. Has no antimicrobial activity against E.coli DH5alpha or B.thuringiensis. Is not cytotoxic in vitro. The protein is Ampulexin 1 of Ampulex compressa (Emerald cockroach wasp).